A 366-amino-acid polypeptide reads, in one-letter code: ACP-SH:acetate ligase (366 aa).

The protein localises to the cytoplasm. The catalysed reaction is holo-[ACP] + acetate + ATP = acetyl-[ACP] + AMP + diphosphate. Acyl-carrier protein (ACP) acetate ligase of the biotin-dependent malonate decarboxylase multienzyme complex (EC 7.2.4.4). Involved in the conversion of the thiol group of the ACP-bound 2'-(5-phosphoribosyl)-3'-dephospho-CoA prosthetic group into its acetyl thioester using the energy from the hydrolysis of ATP. This Malonomonas rubra protein is ACP-SH:acetate ligase (madH).